Consider the following 184-residue polypeptide: uncharacterized protein (184 aa).

This is an uncharacterized protein from Methanocaldococcus jannaschii (strain ATCC 43067 / DSM 2661 / JAL-1 / JCM 10045 / NBRC 100440) (Methanococcus jannaschii).